The following is a 374-amino-acid chain: Queuine tRNA-ribosyltransferase (374 aa).

D92 (proton acceptor) is an active-site residue. Residues 92 to 96 (DSGGY), D146, Q193, and G220 contribute to the substrate site. The tract at residues 251 to 257 (GVGKPDD) is RNA binding. The active-site Nucleophile is the D270. The segment at 275-279 (TRSGR) is RNA binding; important for wobble base 34 recognition. Zn(2+) is bound by residues C308, C310, C313, and H339.

This sequence belongs to the queuine tRNA-ribosyltransferase family. In terms of assembly, homodimer. Within each dimer, one monomer is responsible for RNA recognition and catalysis, while the other monomer binds to the replacement base PreQ1. Zn(2+) serves as cofactor.

It carries out the reaction 7-aminomethyl-7-carbaguanine + guanosine(34) in tRNA = 7-aminomethyl-7-carbaguanosine(34) in tRNA + guanine. It functions in the pathway tRNA modification; tRNA-queuosine biosynthesis. Catalyzes the base-exchange of a guanine (G) residue with the queuine precursor 7-aminomethyl-7-deazaguanine (PreQ1) at position 34 (anticodon wobble position) in tRNAs with GU(N) anticodons (tRNA-Asp, -Asn, -His and -Tyr). Catalysis occurs through a double-displacement mechanism. The nucleophile active site attacks the C1' of nucleotide 34 to detach the guanine base from the RNA, forming a covalent enzyme-RNA intermediate. The proton acceptor active site deprotonates the incoming PreQ1, allowing a nucleophilic attack on the C1' of the ribose to form the product. After dissociation, two additional enzymatic reactions on the tRNA convert PreQ1 to queuine (Q), resulting in the hypermodified nucleoside queuosine (7-(((4,5-cis-dihydroxy-2-cyclopenten-1-yl)amino)methyl)-7-deazaguanosine). The chain is Queuine tRNA-ribosyltransferase from Novosphingobium aromaticivorans (strain ATCC 700278 / DSM 12444 / CCUG 56034 / CIP 105152 / NBRC 16084 / F199).